The sequence spans 365 residues: Peptide chain release factor 2 (365 aa).

Glutamine 252 is modified (N5-methylglutamine).

This sequence belongs to the prokaryotic/mitochondrial release factor family. Methylated by PrmC. Methylation increases the termination efficiency of RF2.

It is found in the cytoplasm. Its function is as follows. Peptide chain release factor 2 directs the termination of translation in response to the peptide chain termination codons UGA and UAA. In Aeromonas salmonicida (strain A449), this protein is Peptide chain release factor 2.